We begin with the raw amino-acid sequence, 430 residues long: Spermatogenic leucine zipper protein 1 (430 aa).

Residues 1-25 (MASSAKSAEMPTISKTVNPTPDPHQ) form a disordered region. A coiled-coil region spans residues 62–102 (EQQTAQKFNNLLKEIKDILKNMAGFEEKITEAKELFEETNI). At serine 107 the chain carries Phosphoserine. Residues 166 to 177 (KINEMLSTNLPV) form a helix-loop-helix motif region. Residues 178-244 (SLAPEKEDNE…NVQEETMKIR (67 aa)) form a basic motif region. 2 coiled-coil regions span residues 214 to 269 (LEEK…KLIK) and 316 to 351 (SLQLMAALLENECQILQQRVEILKELHHQKQGTLQE). The residue at position 258 (serine 258) is a Phosphoserine. The segment at 303-324 (LEEQVKKLSHDTYSLQLMAALL) is leucine-zipper.

Interacts with PPP1CC isoform gamma-2. In terms of processing, phosphorylated by MAPK1/ERK2 and MAPK3/ERK1. Specifically and strongly expressed in the testis. Expressed in several tumor cell lines.

The protein localises to the cytoplasm. Its subcellular location is the nucleus. In terms of biological role, transcription factor that binds to the DNA sequence 5'-CANNTG-3'(E box) and the G-box motif. May play an important role in the regulation of cell proliferation and differentiation during spermatogenesis. The protein is Spermatogenic leucine zipper protein 1 (SPZ1) of Homo sapiens (Human).